The primary structure comprises 390 residues: ATP-sensitive inward rectifier potassium channel 11 (390 aa).

Over 1–65 (MLSRKGIIPE…LQDVFTTLVD (65 aa)) the chain is Cytoplasmic. Positions 48 and 50 each coordinate ATP. The chain crosses the membrane as a helical span at residues 66–92 (LKWPHTLLIFTMSFLCSWLLFAMVWWL). Topologically, residues 93-116 (IAFAHGDLAPGEGTNVPCVTSIHS) are extracellular. Cysteine 110 and cysteine 142 are disulfide-bonded. The discontinuously helical; Pore-forming intramembrane region spans 117–133 (FSSAFLFSIEVQVTIGF). 2 residues coordinate K(+): threonine 130 and phenylalanine 133. Positions 130–135 (TIGFGG) match the Selectivity filter motif. Residues 134–142 (GGRMVTEEC) lie on the Extracellular side of the membrane. A helical membrane pass occupies residues 143–171 (PLAILILIVQNIVGLMINAIMLGCIFMKT). Topologically, residues 172 to 390 (AQAHRRAETL…KFSISPDSLS (219 aa)) are cytoplasmic. Residue arginine 176 participates in a 1,2-diacyl-sn-glycero-3-phospho-(1D-myo-inositol-4,5-bisphosphate) binding. Residue tyrosine 330 coordinates ATP. Threonine 341 bears the Phosphothreonine; by MAPK1 mark. Serine 385 carries the post-translational modification Phosphoserine; by MAPK1.

The protein belongs to the inward rectifier-type potassium channel (TC 1.A.2.1) family. KCNJ11 subfamily. Homotetramer; the homotetramer binds four ATP molecules (one ATP per subunit). Forms an heterooctamer with ABCC8/SUR1; one KCNJ11 homotetramer interacts with four ABCC8/SUR1 molecules. Interacts with ABCC9/SUR2. Phosphorylation by MAPK1 results in changes in channel gating that destabilize the closed states and reduce the ATP sensitivity.

It localises to the membrane. It catalyses the reaction K(+)(in) = K(+)(out). KATP channels are regulated by cytoplasmic ATP/ADP ratios; ATP inhibits the channel by closing the pore, while ADP activates the channel. Activated by phosphatidylinositol 4,5-biphosphate (PtdIns(4,5)P2). Inward rectifier potassium channel that forms the pore of ATP-sensitive potassium channels (KATP), regulating potassium permeability as a function of cytoplasmic ATP and ADP concentrations in many different cells. Inward rectifier potassium channels are characterized by a greater tendency to allow potassium to flow into the cell rather than out of it. Their voltage dependence is regulated by the concentration of extracellular potassium; as external potassium is raised, the voltage range of the channel opening shifts to more positive voltages. The inward rectification is mainly due to the blockage of outward current by internal magnesium. Can be blocked by extracellular barium. In pancreatic cells, it forms KATP channels with ABCC8/SUR1. Can form cardiac and smooth muscle-type KATP channels with ABCC9. The polypeptide is ATP-sensitive inward rectifier potassium channel 11 (Kcnj11) (Mus musculus (Mouse)).